Reading from the N-terminus, the 147-residue chain is Putative pre-16S rRNA nuclease (147 aa).

The protein belongs to the YqgF nuclease family.

It localises to the cytoplasm. Could be a nuclease involved in processing of the 5'-end of pre-16S rRNA. The polypeptide is Putative pre-16S rRNA nuclease (Latilactobacillus sakei subsp. sakei (strain 23K) (Lactobacillus sakei subsp. sakei)).